The sequence spans 193 residues: ER membrane protein complex subunit 4 (193 aa).

Transmembrane regions (helical) follow at residues 91-111 and 137-157; these read ILAYMSGNSLQIFSIMTTLML and LWPAMGAYILFQLLLMGIGVY.

Belongs to the EMC4 family.

It is found in the endoplasmic reticulum membrane. The sequence is that of ER membrane protein complex subunit 4 from Schizosaccharomyces pombe (strain 972 / ATCC 24843) (Fission yeast).